A 536-amino-acid polypeptide reads, in one-letter code: Peptide chain release factor 3 (536 aa).

The region spanning 13–281 is the tr-type G domain; the sequence is SHRRTFAIIS…ALIDWAPAPQ (269 aa). GTP contacts are provided by residues 22–29, 90–94, and 144–147; these read SHPDAGKT, DTPGH, and NKCD.

The protein belongs to the TRAFAC class translation factor GTPase superfamily. Classic translation factor GTPase family. PrfC subfamily.

It localises to the cytoplasm. Functionally, increases the formation of ribosomal termination complexes and stimulates activities of RF-1 and RF-2. It binds guanine nucleotides and has strong preference for UGA stop codons. It may interact directly with the ribosome. The stimulation of RF-1 and RF-2 is significantly reduced by GTP and GDP, but not by GMP. The protein is Peptide chain release factor 3 of Chromobacterium violaceum (strain ATCC 12472 / DSM 30191 / JCM 1249 / CCUG 213 / NBRC 12614 / NCIMB 9131 / NCTC 9757 / MK).